A 718-amino-acid polypeptide reads, in one-letter code: DNA ligase (718 aa).

Residues 44–48, 93–94, and Glu127 each bind NAD(+); these read DADYD and SL. The N6-AMP-lysine intermediate role is filled by Lys129. Positions 150, 186, 302, and 326 each coordinate NAD(+). The Zn(2+) site is built by Cys432, Cys435, Cys456, and Cys462. One can recognise a BRCT domain in the interval 640–718; that stretch reads TAGSPVAGKT…EDEWLALISG (79 aa).

Belongs to the NAD-dependent DNA ligase family. LigA subfamily. The cofactor is Mg(2+). Requires Mn(2+) as cofactor.

The catalysed reaction is NAD(+) + (deoxyribonucleotide)n-3'-hydroxyl + 5'-phospho-(deoxyribonucleotide)m = (deoxyribonucleotide)n+m + AMP + beta-nicotinamide D-nucleotide.. Functionally, DNA ligase that catalyzes the formation of phosphodiester linkages between 5'-phosphoryl and 3'-hydroxyl groups in double-stranded DNA using NAD as a coenzyme and as the energy source for the reaction. It is essential for DNA replication and repair of damaged DNA. This chain is DNA ligase, found in Rhizobium etli (strain ATCC 51251 / DSM 11541 / JCM 21823 / NBRC 15573 / CFN 42).